Reading from the N-terminus, the 604-residue chain is Beta-alanine transporter (604 aa).

Residues Met-1–Ser-23 are Cytoplasmic-facing. Residues Val-24–Ala-44 traverse the membrane as a helical segment. The Extracellular portion of the chain corresponds to Thr-45–Ser-151. Residues Asn-68 and Asn-88 are each glycosylated (N-linked (GlcNAc...) asparagine). The chain crosses the membrane as a helical span at residues Phe-152–Phe-172. Residues Gly-173–Arg-182 lie on the Cytoplasmic side of the membrane. Residues Pro-183–Trp-203 traverse the membrane as a helical segment. Over Asn-204–Arg-212 the chain is Extracellular. A helical transmembrane segment spans residues Phe-213–Leu-233. The Cytoplasmic segment spans residues Val-234 to Thr-243. Residues Ile-244–Val-264 traverse the membrane as a helical segment. Topologically, residues Arg-265–Arg-268 are extracellular. The helical transmembrane segment at Glu-269 to Pro-289 threads the bilayer. Topologically, residues Glu-290–Thr-362 are cytoplasmic. Residues Leu-363–Ala-383 traverse the membrane as a helical segment. At Pro-384–Glu-390 the chain is on the extracellular side. Residues Ile-391–Gly-411 traverse the membrane as a helical segment. Over Leu-412–Arg-418 the chain is Cytoplasmic. The helical transmembrane segment at Trp-419–Pro-439 threads the bilayer. At Asp-440–Thr-442 the chain is on the extracellular side. The helical transmembrane segment at Leu-443–Met-463 threads the bilayer. The Cytoplasmic segment spans residues Ala-464 to Arg-473. A helical transmembrane segment spans residues Gly-474–Ile-494. Topologically, residues Asn-495–Met-501 are extracellular. The helical transmembrane segment at Leu-502–Leu-522 threads the bilayer. Over Leu-523–Leu-604 the chain is Cytoplasmic.

It belongs to the major facilitator (TC 2.A.1) superfamily. Organic cation transporter (TC 2.A.1.19) family. Expressed in the head and predominantly in the retinal pigment cells of the compound eye.

The protein resides in the cell membrane. Its function is as follows. Beta-alanine transporter required for the uptake of beta-alanine by the glia. Required for the recycling process of the neurotransmitter histamine in photoreceptor neurons of the compound eye and therefore for photoreceptor synaptic transmission. Following histamine release from photoreceptors and its uptake by glia, histamine is conjugated to beta-alanine by e/Ebony to form the inactive metabolite, carcinine. In Drosophila melanogaster (Fruit fly), this protein is Beta-alanine transporter.